Reading from the N-terminus, the 403-residue chain is Tryptophan synthase beta chain (403 aa).

Lysine 88 carries the N6-(pyridoxal phosphate)lysine modification.

It belongs to the TrpB family. Tetramer of two alpha and two beta chains. The cofactor is pyridoxal 5'-phosphate.

It carries out the reaction (1S,2R)-1-C-(indol-3-yl)glycerol 3-phosphate + L-serine = D-glyceraldehyde 3-phosphate + L-tryptophan + H2O. It functions in the pathway amino-acid biosynthesis; L-tryptophan biosynthesis; L-tryptophan from chorismate: step 5/5. The beta subunit is responsible for the synthesis of L-tryptophan from indole and L-serine. In Shewanella frigidimarina (strain NCIMB 400), this protein is Tryptophan synthase beta chain.